Here is a 507-residue protein sequence, read N- to C-terminus: E3 ubiquitin-protein ligase TRIM31 (507 aa).

The segment at 16 to 56 (CPICMEILQDPVTIDCGHNFCLQCISQVGKTSEKIQCPLCK) adopts an RING-type zinc-finger fold. Residues 89 to 130 (KEDSRCQRHKEKLHYFCEQDGAFLCVVCRDSKDHKSHNVTLI) form a B box-type zinc finger. Residues cysteine 94, histidine 97, cysteine 116, and histidine 122 each contribute to the Zn(2+) site. Coiled coils occupy residues 176–241 (EKLK…LQSS) and 269–298 (EDLEKKCSEAKARHESIIKTLTELKDDMNA). The 193-residue stretch at 315–507 (EKESWSLLQK…VACSHITLSP (193 aa)) folds into the B30.2/SPRY domain.

Belongs to the TRIM/RBCC family. May form oligomers. Interacts with isoform p52shc of SHC1. Auto-ubiquitinated (in vitro). In terms of tissue distribution, highly expressed in the gastrointestrinal tract, with high expression in the small intestine, moderate in the large intestine and weak in the stomach and esophagus.

Its subcellular location is the cytoplasm. It is found in the mitochondrion. It carries out the reaction S-ubiquitinyl-[E2 ubiquitin-conjugating enzyme]-L-cysteine + [acceptor protein]-L-lysine = [E2 ubiquitin-conjugating enzyme]-L-cysteine + N(6)-ubiquitinyl-[acceptor protein]-L-lysine.. It functions in the pathway protein modification; protein ubiquitination. Functionally, E3 ubiquitin-protein ligase that acts as a regulator of antiviral immune response and inflammation by mediating ubiquitination of substrates. Acts as a regulator of innate immune defense against viruses by mediating 'Lys-63'-linked ubiquitination of MAVS, promoting MAVS polymerization and formation of three-stranded helical filaments on mitochondria. Acts as a negative regulator of the NLRP3 inflammasome by catalyzing 'Lys-48'-linked ubiquitination of NLRP3, leading to its degradation. Regulator of Src-induced anchorage independent cell growth. The protein is E3 ubiquitin-protein ligase TRIM31 of Mus musculus (Mouse).